The chain runs to 388 residues: Probable peptidoglycan glycosyltransferase FtsW (388 aa).

Transmembrane regions (helical) follow at residues 16–36, 54–74, 82–102, 109–129, 144–164, 167–187, 189–209, 233–253, 277–297, 310–330, and 342–362; these read LVLI…SSSV, VFAL…PSQS, WFLL…EIGG, LVVM…LFLA, TAVI…LLQP, GTTV…GAPF, YFVI…INSP, SQAL…GASV, WLGV…MFAV, ALVV…NVGV, and LPFV…IGLV.

It belongs to the SEDS family. FtsW subfamily.

The protein localises to the cell inner membrane. It catalyses the reaction [GlcNAc-(1-&gt;4)-Mur2Ac(oyl-L-Ala-gamma-D-Glu-L-Lys-D-Ala-D-Ala)](n)-di-trans,octa-cis-undecaprenyl diphosphate + beta-D-GlcNAc-(1-&gt;4)-Mur2Ac(oyl-L-Ala-gamma-D-Glu-L-Lys-D-Ala-D-Ala)-di-trans,octa-cis-undecaprenyl diphosphate = [GlcNAc-(1-&gt;4)-Mur2Ac(oyl-L-Ala-gamma-D-Glu-L-Lys-D-Ala-D-Ala)](n+1)-di-trans,octa-cis-undecaprenyl diphosphate + di-trans,octa-cis-undecaprenyl diphosphate + H(+). Its pathway is cell wall biogenesis; peptidoglycan biosynthesis. Its function is as follows. Peptidoglycan polymerase that is essential for cell division. The chain is Probable peptidoglycan glycosyltransferase FtsW from Thiomicrospira cyclica (strain DSM 14477 / JCM 11371 / ALM1) (Thioalkalimicrobium cyclicum).